A 372-amino-acid polypeptide reads, in one-letter code: PqqA peptide cyclase (372 aa).

A Radical SAM core domain is found at 4 to 219; it reads APPPLSVLLE…VDTARRELGD (216 aa). Residues C18, C22, and C25 each contribute to the [4Fe-4S] cluster site. Residues 342 to 372 are disordered; it reads ATAEREAAAPAPEFIYRRPERPAPATADTLE.

Belongs to the radical SAM superfamily. PqqE family. Interacts with PqqD. The interaction is necessary for activity of PqqE. The cofactor is [4Fe-4S] cluster.

The enzyme catalyses [PQQ precursor protein] + S-adenosyl-L-methionine = E-Y cross-linked-[PQQ precursor protein] + 5'-deoxyadenosine + L-methionine + H(+). It functions in the pathway cofactor biosynthesis; pyrroloquinoline quinone biosynthesis. Catalyzes the cross-linking of a glutamate residue and a tyrosine residue in the PqqA protein as part of the biosynthesis of pyrroloquinoline quinone (PQQ). The protein is PqqA peptide cyclase of Xanthomonas oryzae pv. oryzae (strain MAFF 311018).